We begin with the raw amino-acid sequence, 476 residues long: Aspartate kinase Ask_Ect (476 aa).

One can recognise an ACT domain in the interval 405–476 (SAIGSDLKVK…ENHGDVIAAA (72 aa)).

This sequence belongs to the aspartokinase family. Monomer.

It localises to the cytoplasm. The enzyme catalyses L-aspartate + ATP = 4-phospho-L-aspartate + ADP. It functions in the pathway amine and polyamine biosynthesis; ectoine biosynthesis. With respect to regulation, allosterically and strongly feedback inhibited by tryptophan. The presence of either 650 mM NaCl or KCl reduces the inhibition by tryptophan. Functionally, involved in the biosynthesis of L-aspartate-beta-semialdehyde, which is an intermediate in the biosynthesis of ectoine, a highly soluble organic osmolyte, called compatible solute. Ectoine is used to avoid excessive water efflux, plasmolysis, molecular crowding of the cytoplasm, and cessation of growth in high salinity environments. Catalyzes the phosphorylation of the beta-carboxyl group of L-aspartate to yield 4-phospho-L-aspartate. In Stutzerimonas stutzeri (strain A1501) (Pseudomonas stutzeri), this protein is Aspartate kinase Ask_Ect (ask).